We begin with the raw amino-acid sequence, 648 residues long: DNA mismatch repair protein MutL (648 aa).

Residues 336–443 (ERPFEPSSPQ…SGSAGESRAR (108 aa)) are disordered. The span at 370 to 381 (SPESKTHSTWNE) shows a compositional bias: polar residues. The span at 383-410 (SRVDTSRAETSRESRIDSPLGERTRDIA) shows a compositional bias: basic and acidic residues.

Belongs to the DNA mismatch repair MutL/HexB family.

Its function is as follows. This protein is involved in the repair of mismatches in DNA. It is required for dam-dependent methyl-directed DNA mismatch repair. May act as a 'molecular matchmaker', a protein that promotes the formation of a stable complex between two or more DNA-binding proteins in an ATP-dependent manner without itself being part of a final effector complex. This chain is DNA mismatch repair protein MutL, found in Shewanella sp. (strain ANA-3).